Here is a 266-residue protein sequence, read N- to C-terminus: Diphthine synthase (266 aa).

Residues Leu9, Asp84, Val87, 112 to 113 (SI), Leu169, Ala210, and His235 each bind S-adenosyl-L-methionine.

It belongs to the diphthine synthase family. In terms of assembly, homodimer.

The enzyme catalyses 2-[(3S)-amino-3-carboxypropyl]-L-histidyl-[translation elongation factor 2] + 3 S-adenosyl-L-methionine = diphthine-[translation elongation factor 2] + 3 S-adenosyl-L-homocysteine + 3 H(+). The protein operates within protein modification; peptidyl-diphthamide biosynthesis. S-adenosyl-L-methionine-dependent methyltransferase that catalyzes the trimethylation of the amino group of the modified target histidine residue in translation elongation factor 2 (EF-2), to form an intermediate called diphthine. The three successive methylation reactions represent the second step of diphthamide biosynthesis. This Methanosarcina barkeri (strain Fusaro / DSM 804) protein is Diphthine synthase.